The sequence spans 688 residues: Sodium channel and clathrin linker 1 (688 aa).

Ala-2 carries the N-acetylalanine modification. Residues 59–673 are a coiled coil; it reads LIAEYEKHLE…SASQQLSVIT (615 aa). At Ser-681 the chain carries Phosphoserine.

Interacts with SCN10A and clathrin. Identified in a complex containing SCN10A, clathrin and SCLT1. Detected in small neurons in dorsal root ganglia. Detected in C-type fibers of sciatic nerve (at protein level).

The protein resides in the cytoplasm. It is found in the cytoskeleton. The protein localises to the microtubule organizing center. Its subcellular location is the centrosome. It localises to the centriole. In terms of biological role, adapter protein that links SCN10A to clathrin. Regulates SCN10A channel activity, possibly by promoting channel internalization. The chain is Sodium channel and clathrin linker 1 (Sclt1) from Rattus norvegicus (Rat).